We begin with the raw amino-acid sequence, 1067 residues long: Zinc finger MIZ domain-containing protein 1 (1067 aa).

Residues 1–120 (MNSMDRHIQQ…HQKSRQSDPP (120 aa)) form a sufficient for transactivation activity; sufficient for interaction with NOTCH1 region. Lys91 is covalently cross-linked (Glycyl lysine isopeptide (Lys-Gly) (interchain with G-Cter in SUMO2)). Disordered stretches follow at residues 112-141 (QKSR…TLSH) and 327-542 (NSQF…PFPP). Positions 128–141 (PLSSMSSMKPTLSH) are enriched in low complexity. The span at 413–429 (YGNQQYGPNSQFPTQPG) shows a compositional bias: polar residues. The span at 431–440 (YPAPNPPRPL) shows a compositional bias: pro residues. Positions 479–497 (NNTFSGSSYSNYSQGNVNR) are enriched in low complexity. Over residues 510–521 (SPVPGNPTPPMT) the composition is skewed to pro residues. The SP-RING-type zinc finger occupies 727-808 (GEDGVEQTAI…MWGILNAIQH (82 aa)). Residues Cys758, His760, Cys781, and Cys784 each coordinate Zn(2+). Glycyl lysine isopeptide (Lys-Gly) (interchain with G-Cter in SUMO2) cross-links involve residues Lys834 and Lys843. Residues 837–1067 (PDGIPSKRFK…DDLLSLFENN (231 aa)) form a transactivation domain region. Residues 868–879 (GPSPYPLPPPPG) show a composition bias toward pro residues. Residues 868 to 1067 (GPSPYPLPPP…DDLLSLFENN (200 aa)) are disordered. Polar residues-rich tracts occupy residues 881-895 (TNSN…NYQG) and 951-961 (SSDQPHPSIQQ). Residues 981–996 (APPPPPSQPPRQPPQA) are compositionally biased toward pro residues. The segment covering 1040 to 1067 (PDELLSYLDPPDLPSNSNDDLLSLFENN) has biased composition (low complexity).

In terms of assembly, interacts with AR, but not with ESR1, NR3C1, PGR, THRB nor VDR. Interacts with NOTCH1 and RBPJ. Interacts with SMARCA4. Interacts (via SP-RING-type domain) with SMAD3 and SMAD4 (via MH2 domain). Expressed most abundantly in ovary and, at lower levels, in prostate, spleen and testis. Weak expression, if any, in thymus, small intestine, colon and peripheral blood leukocytes.

The protein localises to the nucleus. The protein resides in the nucleoplasm. It is found in the cytoplasm. Functionally, acts as a transcriptional coactivator. Increases ligand-dependent transcriptional activity of AR and promotes AR sumoylation. The stimulation of AR activity is dependent upon sumoylation. Also functions as a transcriptional coactivator in the TGF-beta signaling pathway by increasing the activity of the SMAD3/SMAD4 transcriptional complex. Involved in transcriptional activation of a subset of NOTCH1 target genes including MYC. Involved in thymocyte and T cell development. Involved in the regulation of postmitotic positioning of pyramidal neurons in the developing cerebral cortex. The protein is Zinc finger MIZ domain-containing protein 1 of Homo sapiens (Human).